The following is a 102-amino-acid chain: Mitochondrial import inner membrane translocase subunit Tim10 B (102 aa).

A Twin CX3C motif motif is present at residues 27 to 51 (CFQRCVPSLHHRALDAEEEACLHSC). Cystine bridges form between Cys-27–Cys-51 and Cys-31–Cys-47.

Component of the TIM22 complex, which core is composed of TIMM22, associated with TIMM10 (TIMM10A and/or TIMM10B), TIMM9, AGK and TIMM29.

The protein resides in the mitochondrion inner membrane. Its function is as follows. Component of the TIM22 complex, a complex that mediates the import and insertion of multi-pass transmembrane proteins into the mitochondrial inner membrane. The TIM22 complex forms a twin-pore translocase that uses the membrane potential as the external driving force. In the TIM22 complex, it may act as a docking point for the soluble 70 kDa complex that guides the target proteins in transit through the aqueous mitochondrial intermembrane space. The chain is Mitochondrial import inner membrane translocase subunit Tim10 B (TIMM10B) from Pongo abelii (Sumatran orangutan).